A 267-amino-acid chain; its full sequence is Hydroxyacylglutathione hydrolase (267 aa).

H55, H57, D59, H60, H121, D138, and H176 together coordinate Zn(2+).

This sequence belongs to the metallo-beta-lactamase superfamily. Glyoxalase II family. As to quaternary structure, monomer. Requires Zn(2+) as cofactor.

It catalyses the reaction an S-(2-hydroxyacyl)glutathione + H2O = a 2-hydroxy carboxylate + glutathione + H(+). It participates in secondary metabolite metabolism; methylglyoxal degradation; (R)-lactate from methylglyoxal: step 2/2. Thiolesterase that catalyzes the hydrolysis of S-D-lactoyl-glutathione to form glutathione and D-lactic acid. The sequence is that of Hydroxyacylglutathione hydrolase from Shewanella oneidensis (strain ATCC 700550 / JCM 31522 / CIP 106686 / LMG 19005 / NCIMB 14063 / MR-1).